Reading from the N-terminus, the 90-residue chain is Small ribosomal subunit protein uS15 (90 aa).

Belongs to the universal ribosomal protein uS15 family. Part of the 30S ribosomal subunit. Forms a bridge to the 50S subunit in the 70S ribosome, contacting the 23S rRNA.

Its function is as follows. One of the primary rRNA binding proteins, it binds directly to 16S rRNA where it helps nucleate assembly of the platform of the 30S subunit by binding and bridging several RNA helices of the 16S rRNA. Functionally, forms an intersubunit bridge (bridge B4) with the 23S rRNA of the 50S subunit in the ribosome. The sequence is that of Small ribosomal subunit protein uS15 from Mycoplasmoides gallisepticum (strain R(low / passage 15 / clone 2)) (Mycoplasma gallisepticum).